The following is a 368-amino-acid chain: 3-dehydroquinate synthase (368 aa).

Residues 99-103, 123-124, lysine 136, and lysine 145 contribute to the NAD(+) site; these read GVVGD and TT. Zn(2+) contacts are provided by glutamate 178, histidine 242, and histidine 259.

This sequence belongs to the sugar phosphate cyclases superfamily. Dehydroquinate synthase family. Requires NAD(+) as cofactor. The cofactor is Co(2+). Zn(2+) serves as cofactor.

Its subcellular location is the cytoplasm. The enzyme catalyses 7-phospho-2-dehydro-3-deoxy-D-arabino-heptonate = 3-dehydroquinate + phosphate. Its pathway is metabolic intermediate biosynthesis; chorismate biosynthesis; chorismate from D-erythrose 4-phosphate and phosphoenolpyruvate: step 2/7. Functionally, catalyzes the conversion of 3-deoxy-D-arabino-heptulosonate 7-phosphate (DAHP) to dehydroquinate (DHQ). The polypeptide is 3-dehydroquinate synthase (Chlorobaculum tepidum (strain ATCC 49652 / DSM 12025 / NBRC 103806 / TLS) (Chlorobium tepidum)).